We begin with the raw amino-acid sequence, 1209 residues long: Putative lysine-specific demethylase JMJ16 (1209 aa).

The 42-residue stretch at 146–187 folds into the JmjN domain; it reads APVFYPSEEEFEDTLNYIAKIRPEAEKYGICRIVPPPSWKPP. The Nuclear localization signal signature appears at 217–224; the sequence is MKKISKLP. The region spanning 361–527 is the JmjC domain; that stretch reads KYAKSGWNLN…HGQIAIELYC (167 aa). Residues histidine 407, glutamate 409, and histidine 495 each contribute to the Fe cation site. Residues cysteine 617, cysteine 620, cysteine 631, cysteine 633, cysteine 640, histidine 643, cysteine 648, and cysteine 650 each coordinate Zn(2+). A C5HC2 zinc finger spans residues 617–667; that stretch reads CCICFFDLHLSAAGCRCSPEKYSCLTHVKELCSCPWVTKYFLFRYDIDELN. The tract at residues 872–900 is disordered; the sequence is DTRNTISLPTNDQKTMRRDVPSSTSHAEV. Residues 875–884 are compositionally biased toward polar residues; it reads NTISLPTNDQ. The FYR N-terminal domain maps to 974 to 1032; sequence VVRRINCNVEPLSYGCVLSGKSWCSRRAIFPKGFRSRVKYINILDPTNMCFYISEILDA. Residues 1034–1124 form the FYR C-terminal domain; sequence RNSPLFMVYL…RVCTDYWDSR (91 aa).

This sequence belongs to the JARID1 histone demethylase family. As to quaternary structure, interacts with MMD1 in the nucleus of male meiocytes, especially on pachytene chromosomes. Requires Fe(2+) as cofactor. Confined to inflorescences.

It localises to the nucleus. It carries out the reaction N(6),N(6),N(6)-trimethyl-L-lysyl(4)-[histone H3] + 2-oxoglutarate + O2 = N(6),N(6)-dimethyl-L-lysyl(4)-[histone H3] + formaldehyde + succinate + CO2. The enzyme catalyses N(6),N(6)-dimethyl-L-lysyl(4)-[histone H3] + 2-oxoglutarate + O2 = N(6)-methyl-L-lysyl(4)-[histone H3] + formaldehyde + succinate + CO2. It catalyses the reaction N(6)-methyl-L-lysyl(4)-[histone H3] + 2-oxoglutarate + O2 = L-lysyl(4)-[histone H3] + formaldehyde + succinate + CO2. Its function is as follows. Functions as a histone H3 'Lys-4' (H3K4me) demethylase involved in the negative regulation of gene expression. Active on H3K4me1, H3K4me2 and H3K4me3. Not active on mono-, di- and trimethylated H3K9, H3K27 and H3K36 in somatic cells. However, also active on H3K9 when in complex with MMD1, a meiocyte-specific histone reader. Together with MMD1, promotes gene expression in male meiocytes in an H3K9me3-dependent manner, and contributes to meiotic chromosome condensation by triggering some condensin promoters (e.g. CAP-D3 and CAP-H). Together with JMJ14 and JMJ17, required for plant growth and development. Represses leaf senescence in an age-dependent manner by demethylating H3K4me3 activating histone marks at senescence-associated genes (SAGs) loci, including WRKY53 and SAG201, thus preventing their premature expression. The sequence is that of Putative lysine-specific demethylase JMJ16 from Arabidopsis thaliana (Mouse-ear cress).